Here is a 202-residue protein sequence, read N- to C-terminus: Large ribosomal subunit protein uL4 (202 aa).

A compositionally biased stretch (polar residues) spans 42–52 (GTKAQKSRSQV). A disordered region spans residues 42-70 (GTKAQKSRSQVSGTTKKSKKQKGGGARHG).

The protein belongs to the universal ribosomal protein uL4 family. In terms of assembly, part of the 50S ribosomal subunit.

One of the primary rRNA binding proteins, this protein initially binds near the 5'-end of the 23S rRNA. It is important during the early stages of 50S assembly. It makes multiple contacts with different domains of the 23S rRNA in the assembled 50S subunit and ribosome. Its function is as follows. Forms part of the polypeptide exit tunnel. This Xylella fastidiosa (strain Temecula1 / ATCC 700964) protein is Large ribosomal subunit protein uL4.